A 1148-amino-acid chain; its full sequence is Maintenance of telomere capping protein 5 (1148 aa).

WD repeat units follow at residues 63 to 106 (HHIT…SNAI), 112 to 152 (GHSR…RPFY), 156 to 195 (SWRS…TPLC), 199 to 239 (GHVS…TESK), and 299 to 348 (GHSD…YGKV). The region spanning 432–543 (EEVSAIGHKF…RFVLGEKVSL (112 aa)) is the RWD domain. Serine 759 is subject to Phosphoserine. Residues 963–990 (THNTLNGSSKFTEPAQKQGSRAISSSPF) form a disordered region. Residues 964-990 (HNTLNGSSKFTEPAQKQGSRAISSSPF) are compositionally biased toward polar residues.

This sequence belongs to the WD repeat WDR59 family. Component of the SEA complex composed of at least IML1/SEA1, RTC1/SEA2, MTC5/SEA3, NPR2, NPR3, SEA4, SEC13 and SEH1.

The protein resides in the vacuole membrane. Functionally, component of the SEA complex which coats the vacuolar membrane and is involved in intracellular trafficking, autophagy, response to nitrogen starvation, and amino acid biogenesis. May be involved in telomere capping. This is Maintenance of telomere capping protein 5 (MTC5) from Saccharomyces cerevisiae (strain ATCC 204508 / S288c) (Baker's yeast).